Consider the following 340-residue polypeptide: Coproporphyrin III ferrochelatase (340 aa).

Residues S52 and Y121 each contribute to the Fe-coproporphyrin III site. Residues H177 and E260 each coordinate Fe(2+).

Belongs to the ferrochelatase family.

It localises to the cytoplasm. The catalysed reaction is Fe-coproporphyrin III + 2 H(+) = coproporphyrin III + Fe(2+). The protein operates within porphyrin-containing compound metabolism; protoheme biosynthesis. In terms of biological role, involved in coproporphyrin-dependent heme b biosynthesis. Catalyzes the insertion of ferrous iron into coproporphyrin III to form Fe-coproporphyrin III. This is Coproporphyrin III ferrochelatase from Mycobacteroides abscessus (strain ATCC 19977 / DSM 44196 / CCUG 20993 / CIP 104536 / JCM 13569 / NCTC 13031 / TMC 1543 / L948) (Mycobacterium abscessus).